We begin with the raw amino-acid sequence, 123 residues long: Small ribosomal subunit protein uS12c (123 aa).

It belongs to the universal ribosomal protein uS12 family. Part of the 30S ribosomal subunit.

The protein localises to the plastid. The protein resides in the chloroplast. Its function is as follows. With S4 and S5 plays an important role in translational accuracy. Located at the interface of the 30S and 50S subunits. The polypeptide is Small ribosomal subunit protein uS12c (rps12) (Chaetosphaeridium globosum (Charophycean green alga)).